The primary structure comprises 428 residues: MSVVGTPKSAEQIQQEWDTNPRWKDVTRTYSAEDVVALQGSVVEEHTLARRGAEVLWEQLHDLEWVNALGALTGNMAVQQVRAGLKAIYLSGWQVAGDANLSGHTYPDQSLYPANSVPQVVRRINNALQRADQIAKIEGDTSVENWLAPIVADGEAGFGGALNVYELQKALIAAGVAGSHWEDQLASEKKCGHLGGKVLIPTQQHIRTLTSARLAADVADVPTVVIARTDAEAATLITSDVDERDQPFITGERTREGFYRTKNGIEPCIARAKAYAPFADLIWMETGTPDLEAARQFSEAVKAEYPDQMLAYNCSPSFNWKKHLDDATIAKFQKELAAMGFKFQFITLAGFHALNYSMFDLAYGYAQNQMSAYVELQEREFAAEERGYTATKHQREVGAGYFDRIATTVDPNSSTTALTGSTEEGQFH.

Residue 91–93 (SGW) participates in substrate binding. Residue Asp-153 participates in Mg(2+) binding. The Proton acceptor role is filled by Cys-191. Substrate is bound by residues 192–193 (GH), Arg-228, 313–317 (NCSPS), and Thr-347.

Belongs to the isocitrate lyase/PEP mutase superfamily. Isocitrate lyase family. In terms of assembly, homotetramer. It depends on Mg(2+) as a cofactor.

The enzyme catalyses D-threo-isocitrate = glyoxylate + succinate. It carries out the reaction (2S,3R)-3-hydroxybutane-1,2,3-tricarboxylate = pyruvate + succinate. It participates in carbohydrate metabolism; glyoxylate cycle; (S)-malate from isocitrate: step 1/2. In terms of biological role, involved in the persistence and virulence of M.tuberculosis. Catalyzes the reversible formation of succinate and glyoxylate from isocitrate, a key step of the glyoxylate cycle, which operates as an anaplerotic route for replenishing the tricarboxylic acid cycle during growth on fatty acid substrates. It also catalyzes the formation of pyruvate and succinate from 2-methylisocitrate, a key step in the methylcitrate cycle (propionate degradation route). The sequence is that of Isocitrate lyase 1 (icl1) from Mycobacterium tuberculosis (strain ATCC 35801 / TMC 107 / Erdman).